The primary structure comprises 156 residues: Ribosomal RNA large subunit methyltransferase H (156 aa).

S-adenosyl-L-methionine-binding positions include L73, G104, and 123–128 (LSPLTL).

It belongs to the RNA methyltransferase RlmH family. Homodimer.

It localises to the cytoplasm. It catalyses the reaction pseudouridine(1915) in 23S rRNA + S-adenosyl-L-methionine = N(3)-methylpseudouridine(1915) in 23S rRNA + S-adenosyl-L-homocysteine + H(+). In terms of biological role, specifically methylates the pseudouridine at position 1915 (m3Psi1915) in 23S rRNA. The chain is Ribosomal RNA large subunit methyltransferase H from Aliivibrio fischeri (strain MJ11) (Vibrio fischeri).